We begin with the raw amino-acid sequence, 704 residues long: UvrABC system protein B (704 aa).

The Helicase ATP-binding domain maps to 35–188 (ERINNGEKDV…DDLLRKFVSM (154 aa)). 48–55 (GATGTGKS) contributes to the ATP binding site. Residues 101–124 (YYDYYQPEAYVAQTDTFIEKDSSI) carry the Beta-hairpin motif. The Helicase C-terminal domain occupies 438 to 604 (QIDDLLGEIR…PLRKKIADIT (167 aa)). A UVR domain is found at 659–694 (VGMIAQLTEQMHGAAAELQFEVAARIRDEVSELKKE).

It belongs to the UvrB family. In terms of assembly, forms a heterotetramer with UvrA during the search for lesions. Interacts with UvrC in an incision complex.

It is found in the cytoplasm. The UvrABC repair system catalyzes the recognition and processing of DNA lesions. A damage recognition complex composed of 2 UvrA and 2 UvrB subunits scans DNA for abnormalities. Upon binding of the UvrA(2)B(2) complex to a putative damaged site, the DNA wraps around one UvrB monomer. DNA wrap is dependent on ATP binding by UvrB and probably causes local melting of the DNA helix, facilitating insertion of UvrB beta-hairpin between the DNA strands. Then UvrB probes one DNA strand for the presence of a lesion. If a lesion is found the UvrA subunits dissociate and the UvrB-DNA preincision complex is formed. This complex is subsequently bound by UvrC and the second UvrB is released. If no lesion is found, the DNA wraps around the other UvrB subunit that will check the other stand for damage. This chain is UvrABC system protein B, found in Pseudarthrobacter chlorophenolicus (strain ATCC 700700 / DSM 12829 / CIP 107037 / JCM 12360 / KCTC 9906 / NCIMB 13794 / A6) (Arthrobacter chlorophenolicus).